A 191-amino-acid chain; its full sequence is MSPISILLIGFAMSTDAFAAAIGKGAAMRKPVFRDALRAGIIFGVIEAITPIIGWLLGRAALQYVEAFDHWIAFGLLGALGIHMIYNGLRPDSAEEDEDPSQHHGFWKLALTGFATSIDAMAVGIGLAFMDVHIGVMAVVIGLCTLTMVTVGIMLGRVLGSMVGKRAEIIGGVILVIIGATILYEHLHGVA.

Helical transmembrane passes span 3 to 23 (PISI…AAIG), 37 to 57 (LRAG…GWLL), 65 to 85 (VEAF…IHMI), 107 to 129 (WKLA…GLAF), 144 to 164 (CTLT…SMVG), and 169 to 189 (IIGG…HLHG).

It belongs to the MntP (TC 9.B.29) family.

It is found in the cell inner membrane. Probably functions as a manganese efflux pump. The polypeptide is Putative manganese efflux pump MntP (Stenotrophomonas maltophilia (strain R551-3)).